The following is a 912-amino-acid chain: Protein translocase subunit SecA (912 aa).

ATP-binding positions include glutamine 87, 105–109 (GEGKT), and aspartate 509. Over residues 847-859 (RERAVSQPVHEDA) the composition is skewed to basic and acidic residues. The interval 847 to 912 (RERAVSQPVH…KYKHCHGKLN (66 aa)) is disordered. Residues 867 to 878 (AESEEASGESAD) are compositionally biased toward acidic residues. The segment covering 881 to 892 (QPVRRDGPKVGR) has biased composition (basic and acidic residues). Cysteine 896, cysteine 898, cysteine 907, and histidine 908 together coordinate Zn(2+). The segment covering 902–912 (KKYKHCHGKLN) has biased composition (basic residues).

Belongs to the SecA family. In terms of assembly, monomer and homodimer. Part of the essential Sec protein translocation apparatus which comprises SecA, SecYEG and auxiliary proteins SecDF-YajC and YidC. The cofactor is Zn(2+).

The protein resides in the cell inner membrane. It is found in the cytoplasm. The enzyme catalyses ATP + H2O + cellular proteinSide 1 = ADP + phosphate + cellular proteinSide 2.. Part of the Sec protein translocase complex. Interacts with the SecYEG preprotein conducting channel. Has a central role in coupling the hydrolysis of ATP to the transfer of proteins into and across the cell membrane, serving both as a receptor for the preprotein-SecB complex and as an ATP-driven molecular motor driving the stepwise translocation of polypeptide chains across the membrane. The sequence is that of Protein translocase subunit SecA from Chromohalobacter salexigens (strain ATCC BAA-138 / DSM 3043 / CIP 106854 / NCIMB 13768 / 1H11).